Consider the following 125-residue polypeptide: Small ribosomal subunit protein uS12c (125 aa).

The protein belongs to the universal ribosomal protein uS12 family. As to quaternary structure, part of the 30S ribosomal subunit.

It localises to the plastid. In terms of biological role, with S4 and S5 plays an important role in translational accuracy. Located at the interface of the 30S and 50S subunits. In Euglena longa (Euglenophycean alga), this protein is Small ribosomal subunit protein uS12c (rps12).